We begin with the raw amino-acid sequence, 46 residues long: Large ribosomal subunit protein bL36A (46 aa).

The protein belongs to the bacterial ribosomal protein bL36 family.

The polypeptide is Large ribosomal subunit protein bL36A (Sodalis glossinidius (strain morsitans)).